We begin with the raw amino-acid sequence, 511 residues long: Portal protein (511 aa).

Belongs to the Tevenvirinae portal protein family. In terms of assembly, homododecamer. Interacts with the large terminase subunit. Interacts with the major capsid protein. Interacts with the capsid vertex protein.

Its subcellular location is the virion. Its function is as follows. Forms the portal vertex of the capsid. This portal plays critical roles in head assembly, genome packaging, neck/tail attachment, and genome ejection. The portal protein multimerizes as a single ring-shaped homododecamer arranged around a central channel. Binds to the terminase subunits to form the packaging machine. The sequence is that of Portal protein from Vibrio phage KVP40 (isolate Vibrio parahaemolyticus/Japan/Matsuzaki/1991) (KVP40).